A 169-amino-acid polypeptide reads, in one-letter code: UPF0398 protein Spy49_1277c (169 aa).

Belongs to the UPF0398 family.

The polypeptide is UPF0398 protein Spy49_1277c (Streptococcus pyogenes serotype M49 (strain NZ131)).